Here is a 240-residue protein sequence, read N- to C-terminus: Uridylate kinase (240 aa).

13-16 (KFSG) lines the ATP pocket. Glycine 55 contributes to the UMP binding site. The ATP site is built by glycine 56 and arginine 60. Residues aspartate 76 and 137–144 (TGNPFFTT) each bind UMP. ATP is bound by residues threonine 164, tyrosine 170, and aspartate 173.

It belongs to the UMP kinase family. In terms of assembly, homohexamer.

It localises to the cytoplasm. It carries out the reaction UMP + ATP = UDP + ADP. It functions in the pathway pyrimidine metabolism; CTP biosynthesis via de novo pathway; UDP from UMP (UMPK route): step 1/1. Its activity is regulated as follows. Inhibited by UTP. In terms of biological role, catalyzes the reversible phosphorylation of UMP to UDP. The polypeptide is Uridylate kinase (Helicobacter pylori (strain HPAG1)).